Here is a 207-residue protein sequence, read N- to C-terminus: Large ribosomal subunit protein uL4 (207 aa).

Residues 62-85 (KKPFKQKGTGQARQGCRRAPQYPG) are disordered.

This sequence belongs to the universal ribosomal protein uL4 family. As to quaternary structure, part of the 50S ribosomal subunit.

Its function is as follows. One of the primary rRNA binding proteins, this protein initially binds near the 5'-end of the 23S rRNA. It is important during the early stages of 50S assembly. It makes multiple contacts with different domains of the 23S rRNA in the assembled 50S subunit and ribosome. Forms part of the polypeptide exit tunnel. This is Large ribosomal subunit protein uL4 from Geobacter sp. (strain M21).